The following is a 309-amino-acid chain: Olfactory receptor 7A10 (309 aa).

Over 1–25 (MKSWNNTIILEFLLLGISEEPELQA) the chain is Extracellular. Residue asparagine 5 is glycosylated (N-linked (GlcNAc...) asparagine). Residues 26 to 46 (FLFGLFLSMYLVTVLGNLLII) form a helical membrane-spanning segment. Residues 47–54 (LATISDSH) are Cytoplasmic-facing. Residues 55–75 (LHTPMYFFLSNLSFVDICFVS) form a helical membrane-spanning segment. The Extracellular portion of the chain corresponds to 76–99 (TTVPKMLVNIQTHNKVITYAGCIT). A disulfide bridge connects residues cysteine 97 and cysteine 189. The helical transmembrane segment at 100–120 (QMCFFLLFVGLDNFLLTVMAY) threads the bilayer. Topologically, residues 121–139 (DRFVAICHPLHYMVIMNPQ) are cytoplasmic. The helical transmembrane segment at 140–160 (LCGLLVLASWIMSVLNSMLQS) threads the bilayer. At 161–197 (LMVLPLPFCTHMEIPHFFCEINQVVHLACSDTFLNDI) the chain is on the extracellular side. A helical transmembrane segment spans residues 198–217 (VMYFAVALLGGGPLTGILYS). Over 218–237 (YSKIVSSIRAISSAQGKYKA) the chain is Cytoplasmic. The chain crosses the membrane as a helical span at residues 238 to 258 (FSTCASHLSVVSLFYGTCLGV). At 259 to 271 (YLSSAATHNSHTG) the chain is on the extracellular side. A helical transmembrane segment spans residues 272-292 (AAASVMYTVVTPMLNPFIYSL). The Cytoplasmic segment spans residues 293 to 309 (RNKHIKGAMKTFFRGKQ).

It belongs to the G-protein coupled receptor 1 family.

The protein resides in the cell membrane. Functionally, odorant receptor. The protein is Olfactory receptor 7A10 (OR7A10) of Homo sapiens (Human).